Reading from the N-terminus, the 172-residue chain is 3-hydroxydecanoyl-[acyl-carrier-protein] dehydratase (172 aa).

The active site involves His-71.

It belongs to the thioester dehydratase family. FabA subfamily. In terms of assembly, homodimer.

It localises to the cytoplasm. The enzyme catalyses a (3R)-hydroxyacyl-[ACP] = a (2E)-enoyl-[ACP] + H2O. The catalysed reaction is (3R)-hydroxydecanoyl-[ACP] = (2E)-decenoyl-[ACP] + H2O. It catalyses the reaction (2E)-decenoyl-[ACP] = (3Z)-decenoyl-[ACP]. Its pathway is lipid metabolism; fatty acid biosynthesis. Functionally, necessary for the introduction of cis unsaturation into fatty acids. Catalyzes the dehydration of (3R)-3-hydroxydecanoyl-ACP to E-(2)-decenoyl-ACP and then its isomerization to Z-(3)-decenoyl-ACP. Can catalyze the dehydratase reaction for beta-hydroxyacyl-ACPs with saturated chain lengths up to 16:0, being most active on intermediate chain length. The protein is 3-hydroxydecanoyl-[acyl-carrier-protein] dehydratase of Salmonella agona (strain SL483).